The following is a 38-amino-acid chain: RapG inhibitor (38 aa).

A propeptide spanning residues 1 to 33 is cleaved from the precursor; the sequence is MKRFLIGAGVAAVILSGWFIADHQTHSQEMKVA.

This sequence belongs to the Phr family. In terms of processing, contains a predicted signal peptide cleavage site in the N-terminal region, however the propeptide is probably subject to only one processing event, at the N-terminal end of the mature peptide.

It localises to the secreted. The protein localises to the cytoplasm. Signaling molecule involved in the regulation of expression of DegU-controlled genes. Secreted during production, but the mature peptide acts intracellularly, indicating that it needs to be imported into the cell to function. Stimulates the DegU-dependent expression of aprE, an extracellular alkaline protease. Acts by inhibiting RapG activity. At high concentrations, represses the DegS-dependent aprE expression. The sequence is that of RapG inhibitor (phrG) from Bacillus subtilis (strain 168).